We begin with the raw amino-acid sequence, 394 residues long: Elongation factor Tu 1 (394 aa).

Residues 10 to 204 enclose the tr-type G domain; it reads KPHVNVGTIG…ALDSYIPQPE (195 aa). Residues 19-26 form a G1 region; sequence GHVDHGKT. 19–26 contacts GTP; it reads GHVDHGKT. A Mg(2+)-binding site is contributed by Thr26. The G2 stretch occupies residues 60–64; sequence GITIN. A G3 region spans residues 81–84; sequence DCPG. GTP is bound by residues 81–85 and 136–139; these read DCPGH and NKCD. The tract at residues 136–139 is G4; the sequence is NKCD. Positions 174–176 are G5; it reads SAL.

The protein belongs to the TRAFAC class translation factor GTPase superfamily. Classic translation factor GTPase family. EF-Tu/EF-1A subfamily. In terms of assembly, monomer.

It is found in the cytoplasm. It catalyses the reaction GTP + H2O = GDP + phosphate + H(+). Functionally, GTP hydrolase that promotes the GTP-dependent binding of aminoacyl-tRNA to the A-site of ribosomes during protein biosynthesis. This is Elongation factor Tu 1 from Yersinia pestis bv. Antiqua (strain Nepal516).